The sequence spans 232 residues: tRNA (guanine-N(7)-)-methyltransferase (232 aa).

E63, E88, D115, and D137 together coordinate S-adenosyl-L-methionine. D137 is an active-site residue. Substrate-binding positions include K141, D173, and T211–E214.

This sequence belongs to the class I-like SAM-binding methyltransferase superfamily. TrmB family.

The catalysed reaction is guanosine(46) in tRNA + S-adenosyl-L-methionine = N(7)-methylguanosine(46) in tRNA + S-adenosyl-L-homocysteine. It participates in tRNA modification; N(7)-methylguanine-tRNA biosynthesis. Catalyzes the formation of N(7)-methylguanine at position 46 (m7G46) in tRNA. This Chelativorans sp. (strain BNC1) protein is tRNA (guanine-N(7)-)-methyltransferase.